The primary structure comprises 319 residues: G-protein coupled receptor 55 (319 aa).

Topologically, residues methionine 1–threonine 21 are extracellular. Asparagine 5 carries an N-linked (GlcNAc...) asparagine glycan. A helical membrane pass occupies residues leucine 22–isoleucine 42. The Cytoplasmic portion of the chain corresponds to histidine 43 to alanine 58. A helical transmembrane segment spans residues threonine 59–phenylalanine 79. Topologically, residues lysine 80–cysteine 94 are extracellular. Residues threonine 95–isoleucine 115 form a helical membrane-spanning segment. Residues serine 116–lysine 137 lie on the Cytoplasmic side of the membrane. Residues isoleucine 138–serine 158 form a helical membrane-spanning segment. At phenylalanine 159–lysine 180 the chain is on the extracellular side. Residue asparagine 171 is glycosylated (N-linked (GlcNAc...) asparagine). Residues valine 181–cysteine 201 traverse the membrane as a helical segment. Residues serine 202–serine 231 are Cytoplasmic-facing. A helical membrane pass occupies residues leucine 232–valine 252. Over arginine 253–glutamine 271 the chain is Extracellular. Residues leucine 272 to isoleucine 292 traverse the membrane as a helical segment. The Cytoplasmic segment spans residues lysine 293–glycine 319.

It belongs to the G-protein coupled receptor 1 family. In terms of tissue distribution, expressed in the caudate nucleus and putamen, but not detected in the hippocampus, thalamus, pons cerebellum, frontal cortex of the brain or in the liver. Expressed in osteoclasts and osteoblasts. Higly expressed in macrophages and B-cells.

It localises to the cell membrane. Its function is as follows. G-protein coupled receptor that binds to several ligands including 2-arachidonoyl lysophosphatidylinositol or lysophosphatidylglucoside with high affinity, leading to rapid and transient activation of numerous intracellular signaling pathways. Induces the Ca(2+) release from intracellular stores via ERK, the heterotrimeric G protein GNA13 and RHOA leading to morphological changes including cell rounding and stress fiber formation. In macrophages, acts downstream of lysophosphatidylglucoside to inhibit the translocation of the phospholipid-transporting ABCA1 to plasma membrane and subsequent cholesterol efflux leading to lipid accumulation and foam cell formation. This chain is G-protein coupled receptor 55 (GPR55), found in Homo sapiens (Human).